A 588-amino-acid chain; its full sequence is Aspartate--tRNA ligase (588 aa).

Glutamate 171 contacts L-aspartate. The aspartate stretch occupies residues 195-198 (QLFK). Position 217 (arginine 217) interacts with L-aspartate. ATP is bound by residues 217 to 219 (RDE) and glutamine 226. Histidine 447 is an L-aspartate binding site. Residue glutamate 481 coordinates ATP. Arginine 488 is an L-aspartate binding site. 533-536 (GLDR) serves as a coordination point for ATP.

The protein belongs to the class-II aminoacyl-tRNA synthetase family. Type 1 subfamily. As to quaternary structure, homodimer.

Its subcellular location is the cytoplasm. It catalyses the reaction tRNA(Asp) + L-aspartate + ATP = L-aspartyl-tRNA(Asp) + AMP + diphosphate. Functionally, catalyzes the attachment of L-aspartate to tRNA(Asp) in a two-step reaction: L-aspartate is first activated by ATP to form Asp-AMP and then transferred to the acceptor end of tRNA(Asp). This is Aspartate--tRNA ligase from Aeromonas salmonicida (strain A449).